We begin with the raw amino-acid sequence, 504 residues long: ATP synthase subunit alpha, chloroplastic (504 aa).

170-177 contacts ATP; the sequence is GDRQTGKT.

This sequence belongs to the ATPase alpha/beta chains family. As to quaternary structure, F-type ATPases have 2 components, CF(1) - the catalytic core - and CF(0) - the membrane proton channel. CF(1) has five subunits: alpha(3), beta(3), gamma(1), delta(1), epsilon(1). CF(0) has four main subunits: a, b, b' and c.

It localises to the plastid. The protein localises to the chloroplast thylakoid membrane. The catalysed reaction is ATP + H2O + 4 H(+)(in) = ADP + phosphate + 5 H(+)(out). Produces ATP from ADP in the presence of a proton gradient across the membrane. The alpha chain is a regulatory subunit. This Porphyra purpurea (Red seaweed) protein is ATP synthase subunit alpha, chloroplastic.